A 594-amino-acid chain; its full sequence is Interactor of HORMAD1 protein 1 (594 aa).

Coiled-coil stretches lie at residues Val-109–Leu-135, Gln-165–Val-189, and Glu-219–Leu-245. The span at Val-434 to Gln-443 shows a compositional bias: basic and acidic residues. The interval Val-434–Gly-454 is disordered. The segment covering Gln-444–Gly-454 has biased composition (basic residues). Residues Ser-588 and Ser-589 each carry the phosphoserine modification.

As to quaternary structure, part of the MCD recombinosome complex, at least composed of IHO1, REC114 and MEI4. Interacts with REC114. Interacts with MEI4. Interacts with HORMAD1. Interacts with ANKRD31.

The protein localises to the chromosome. Required for DNA double-strand breaks (DSBs) formation in unsynapsed regions during meiotic recombination. Probably acts by forming a complex with MEI4 and REC114, which activates DSBs formation in unsynapsed regions, an essential step to ensure completion of synapsis. Not required for HORMAD1 functions in pairing-independent synaptonemal complex formation, ATR recruitment to unsynapsed axes, meiotic silencing of unsynapsed chromatin (MSUC) or meiotic surveillance. In Homo sapiens (Human), this protein is Interactor of HORMAD1 protein 1.